The primary structure comprises 207 residues: Small ribosomal subunit protein uS4c (207 aa).

In terms of domain architecture, S4 RNA-binding spans 92–150 (MRLDNILFRLGFVPTIPSARQLINHRHILVNNRIVDVPSFHCKPKDIITIGSPKTYQSI).

The protein belongs to the universal ribosomal protein uS4 family. As to quaternary structure, part of the 30S ribosomal subunit. Contacts protein S5. The interaction surface between S4 and S5 is involved in control of translational fidelity.

It is found in the plastid. Its subcellular location is the chloroplast. Functionally, one of the primary rRNA binding proteins, it binds directly to 16S rRNA where it nucleates assembly of the body of the 30S subunit. Its function is as follows. With S5 and S12 plays an important role in translational accuracy. The protein is Small ribosomal subunit protein uS4c (rps4) of Equisetum variegatum (Variegated horsetail).